We begin with the raw amino-acid sequence, 121 residues long: MLATRVRRRSSRLIRSRPLVVRSRMRCAAGKSNTVRLSGMAVSAHSASFGCSLHQRVRAAFKSRSASVRSGALKMARIWAATVFRASCRVVSAPAFCCRWNWQRCQGTEGSTARRAALSPA.

This is Insertion element IS406 uncharacterized 13.3 kDa protein from Burkholderia multivorans (strain ATCC 17616 / 249).